The primary structure comprises 463 residues: tRNA dimethylallyltransferase 9 (463 aa).

57 to 64 (GPTGAGKS) is an ATP binding site. 59–64 (TGAGKS) contributes to the substrate binding site. The interval 82–85 (DSVQ) is interaction with substrate tRNA.

This sequence belongs to the IPP transferase family. Mg(2+) is required as a cofactor. Expressed ubiquitously, with highest expression in proliferating tissues.

Its subcellular location is the cytoplasm. The catalysed reaction is adenosine(37) in tRNA + dimethylallyl diphosphate = N(6)-dimethylallyladenosine(37) in tRNA + diphosphate. In terms of biological role, catalyzes the transfer of a dimethylallyl group onto the adenine at position 37 in tRNAs that read codons beginning with uridine, leading to the formation of N6-(dimethylallyl)adenosine (i(6)A). Involved in the cis-type cytokinin biosynthesis. This is tRNA dimethylallyltransferase 9 (IPT9) from Arabidopsis thaliana (Mouse-ear cress).